Consider the following 557-residue polypeptide: Arginine--tRNA ligase (557 aa).

The 'HIGH' region motif lies at 132–142 (ANPTGLLHMGN).

Belongs to the class-I aminoacyl-tRNA synthetase family. In terms of assembly, monomer.

It localises to the cytoplasm. The catalysed reaction is tRNA(Arg) + L-arginine + ATP = L-arginyl-tRNA(Arg) + AMP + diphosphate. This chain is Arginine--tRNA ligase, found in Carboxydothermus hydrogenoformans (strain ATCC BAA-161 / DSM 6008 / Z-2901).